Reading from the N-terminus, the 439-residue chain is Histidine--tRNA ligase (439 aa).

It belongs to the class-II aminoacyl-tRNA synthetase family. Homodimer.

It localises to the cytoplasm. The catalysed reaction is tRNA(His) + L-histidine + ATP = L-histidyl-tRNA(His) + AMP + diphosphate + H(+). The chain is Histidine--tRNA ligase from Clostridium tetani (strain Massachusetts / E88).